Reading from the N-terminus, the 129-residue chain is Glycine cleavage system H protein (129 aa).

The Lipoyl-binding domain maps to 24 to 106 (TYTVGITEHA…YADGWIFKIK (83 aa)). At K65 the chain carries N6-lipoyllysine.

This sequence belongs to the GcvH family. As to quaternary structure, the glycine cleavage system is composed of four proteins: P, T, L and H. (R)-lipoate is required as a cofactor.

In terms of biological role, the glycine cleavage system catalyzes the degradation of glycine. The H protein shuttles the methylamine group of glycine from the P protein to the T protein. The chain is Glycine cleavage system H protein from Salmonella arizonae (strain ATCC BAA-731 / CDC346-86 / RSK2980).